The sequence spans 250 residues: Imidazole glycerol phosphate synthase subunit HisF (250 aa).

Residues aspartate 11 and aspartate 130 contribute to the active site.

Belongs to the HisA/HisF family. In terms of assembly, heterodimer of HisH and HisF.

It localises to the cytoplasm. It carries out the reaction 5-[(5-phospho-1-deoxy-D-ribulos-1-ylimino)methylamino]-1-(5-phospho-beta-D-ribosyl)imidazole-4-carboxamide + L-glutamine = D-erythro-1-(imidazol-4-yl)glycerol 3-phosphate + 5-amino-1-(5-phospho-beta-D-ribosyl)imidazole-4-carboxamide + L-glutamate + H(+). It functions in the pathway amino-acid biosynthesis; L-histidine biosynthesis; L-histidine from 5-phospho-alpha-D-ribose 1-diphosphate: step 5/9. IGPS catalyzes the conversion of PRFAR and glutamine to IGP, AICAR and glutamate. The HisF subunit catalyzes the cyclization activity that produces IGP and AICAR from PRFAR using the ammonia provided by the HisH subunit. The protein is Imidazole glycerol phosphate synthase subunit HisF of Bacteroides fragilis (strain YCH46).